Consider the following 107-residue polypeptide: UPF0060 membrane protein Atu1058 (107 aa).

The next 4 membrane-spanning stretches (helical) occupy residues 5–25, 32–52, 59–79, and 85–105; these read LIYVLAAVAEIAGCFSFWAWL, WILLPGMVALAAFAWLLTLVA, AYAAYGGIYIAASLFWLWGVE, and RWDIAGGVVCLAGTAIILFGP.

Belongs to the UPF0060 family.

The protein localises to the cell inner membrane. The polypeptide is UPF0060 membrane protein Atu1058 (Agrobacterium fabrum (strain C58 / ATCC 33970) (Agrobacterium tumefaciens (strain C58))).